We begin with the raw amino-acid sequence, 248 residues long: Aliphatic sulfonates import ATP-binding protein SsuB 2 (248 aa).

One can recognise an ABC transporter domain in the interval 14 to 230; that stretch reads VRVESLVRSF…DHGHRRFGEI (217 aa). 46-53 is an ATP binding site; sequence GRSGSGKS.

Belongs to the ABC transporter superfamily. Aliphatic sulfonates importer (TC 3.A.1.17.2) family. The complex is composed of two ATP-binding proteins (SsuB), two transmembrane proteins (SsuC) and a solute-binding protein (SsuA).

The protein localises to the cell inner membrane. It carries out the reaction ATP + H2O + aliphatic sulfonate-[sulfonate-binding protein]Side 1 = ADP + phosphate + aliphatic sulfonateSide 2 + [sulfonate-binding protein]Side 1.. Functionally, part of the ABC transporter complex SsuABC involved in aliphatic sulfonates import. Responsible for energy coupling to the transport system. This chain is Aliphatic sulfonates import ATP-binding protein SsuB 2, found in Mesorhizobium japonicum (strain LMG 29417 / CECT 9101 / MAFF 303099) (Mesorhizobium loti (strain MAFF 303099)).